Reading from the N-terminus, the 165-residue chain is Thiol peroxidase (165 aa).

The 148-residue stretch at Pro-18–Leu-165 folds into the Thioredoxin domain. Cys-60 serves as the catalytic Cysteine sulfenic acid (-SOH) intermediate. Cys-60 and Cys-94 are oxidised to a cystine.

Belongs to the peroxiredoxin family. Tpx subfamily. As to quaternary structure, homodimer.

It catalyses the reaction a hydroperoxide + [thioredoxin]-dithiol = an alcohol + [thioredoxin]-disulfide + H2O. In terms of biological role, thiol-specific peroxidase that catalyzes the reduction of hydrogen peroxide and organic hydroperoxides to water and alcohols, respectively. Plays a role in cell protection against oxidative stress by detoxifying peroxides. The sequence is that of Thiol peroxidase from Pseudomonas aeruginosa (strain ATCC 15692 / DSM 22644 / CIP 104116 / JCM 14847 / LMG 12228 / 1C / PRS 101 / PAO1).